A 513-amino-acid polypeptide reads, in one-letter code: MAGGSFGPTGVAKERAEQYQGKVTSYVIIACLVAAIGGSIFGYDIGISGGVTSMDEFLEEFFHTVYEKKKQAHESNYCKYDNQGLAAFTSSLYLAGLVSTLVASPITRNYGRRASIVCGGISFLIGSGLNAGAVNLAMLLAGRIMLGVGIGFGNQAVPLYLSEVAPTHLRGGLNMMFQLATTIGIFTANMVNYGTQQLKPWGWRLSLGLAAFPALLMTLGGYFLPETPNSLVERGLTERGRRVLVKLRGTENVNAELQDMVDASELANSIKHPFRNILQKRHRPQLVMAICMPMFQILTGINSILFYAPVLFQTMGFGGNASLYSSALTGAVLVLSTFISIGLVDRLGRRALLITGGIQMIICQVIVAVILGVKFGDNQELSKGYSVIVVIFICLFVVAFGWSWGPLGWTIPSEIFPLETRSAGQSITVAVNLLFTFIIAQAFLGLLCAFKFGIFLFFAGWVTVMTIFVYFLLPETKGVPIEEMTLLWSKHWFWKKVLPDATNLEDESKNVSV.

The Cytoplasmic segment spans residues 1 to 26 (MAGGSFGPTGVAKERAEQYQGKVTSY). Helical transmembrane passes span 27–47 (VIIA…DIGI), 84–104 (GLAA…LVAS), 121–141 (ISFL…MLLA), 144–164 (IMLG…LSEV), 171–191 (GGLN…ANMV), 205–225 (LSLG…YFLP), 286–306 (LVMA…SILF), 324–344 (YSSA…IGLV), 351–371 (ALLI…AVIL), 387–407 (VIVV…WGPL), 427–447 (ITVA…LGLL), and 452–472 (FGIF…VYFL). At 473–513 (LPETKGVPIEEMTLLWSKHWFWKKVLPDATNLEDESKNVSV) the chain is on the cytoplasmic side.

The protein belongs to the major facilitator superfamily. Sugar transporter (TC 2.A.1.1) family.

Its subcellular location is the cell membrane. In terms of biological role, mediates an active uptake of hexoses, probably by sugar/hydrogen symport. The polypeptide is Sugar transport protein 7 (STP7) (Arabidopsis thaliana (Mouse-ear cress)).